The following is a 1956-amino-acid chain: Sodium channel protein type 10 subunit alpha (1956 aa).

Over 1–125 (MELPFASVGT…FNLIRRTAIK (125 aa)) the chain is Cytoplasmic. The tract at residues 31–54 (HRAAKKARTKHRGQEDKGEKPRPQ) is disordered. The span at 32–41 (RAAKKARTKH) shows a compositional bias: basic residues. A compositionally biased stretch (basic and acidic residues) spans 42-54 (RGQEDKGEKPRPQ). Residues 116-404 (FNLIRRTAIK…VTMAYEEQSQ (289 aa)) form an I repeat. Residues 126 to 149 (VSVHSWFSIFITITILVNCVCMTR) traverse the membrane as a helical segment. Residues 150 to 154 (TDLPE) lie on the Extracellular side of the membrane. Residues 155-174 (KVEYVFTVIYTFEALIKILA) form a helical membrane-spanning segment. Topologically, residues 175-187 (RGFCLNEFTYLRD) are cytoplasmic. The chain crosses the membrane as a helical span at residues 188-206 (PWNWLDFSVITLAYVGAAI). At 207–212 (DLRGIS) the chain is on the extracellular side. A helical; Voltage-sensor transmembrane segment spans residues 213-232 (GLRTFRVLRALKTVSVIPGL). The Cytoplasmic portion of the chain corresponds to 233-248 (KVIVGALIHSVRKLAD). A helical transmembrane segment spans residues 249–272 (VTILTVFCLSVFALVGLQLFKGNL). Residues 273–340 (KNKCIRNGTD…PDFNYTSFDS (68 aa)) lie on the Extracellular side of the membrane. Residues Cys-276 and Cys-318 are joined by a disulfide bond. Residues Asn-279, Asn-288, Asn-311, and Asn-334 are each glycosylated (N-linked (GlcNAc...) asparagine). An intramembrane region (pore-forming) is located at residues 341 to 365 (FAWAFLSLFRLMTQDSWERLYQQTL). The Extracellular segment spans residues 366-372 (RASGKMY). A helical transmembrane segment spans residues 373–398 (MVFFVLVIFLGSFYLVNLILAVVTMA). Residues 399–658 (YEEQSQATIA…KWRKFKMALF (260 aa)) are Cytoplasmic-facing. Phosphoserine is present on residues Ser-440, Ser-443, Ser-466, and Ser-478. Over residues 441–453 (LQSHSGSPLASKN) the composition is skewed to polar residues. Disordered stretches follow at residues 441-484 (LQSH…YNQR) and 537-581 (LLGR…AGAP). The span at 475-484 (SPQSDPYNQR) shows a compositional bias: polar residues. Ser-611 and Ser-614 each carry phosphoserine. An II repeat occupies 646-910 (CCPKWRKFKM…EDDGEVNNLQ (265 aa)). Residues 659–683 (ELVTDPFAELTITLCIVVNTVFMAM) traverse the membrane as a helical segment. At 684-694 (EHYPMTDAFDA) the chain is on the extracellular side. The chain crosses the membrane as a helical span at residues 695-718 (MLQAGNIVFTVFFTMEMAFKIIAF). Topologically, residues 719–726 (DPYYYFQK) are cytoplasmic. The helical transmembrane segment at 727 to 746 (KWNIFDCVIVTVSLLELSAS) threads the bilayer. Topologically, residues 747 to 752 (KKGSLS) are extracellular. The helical; Voltage-sensor transmembrane segment at 753 to 772 (VLRTFRLLRVFKLAKSWPTL) threads the bilayer. Topologically, residues 773-788 (NTLIKIIGNSVGALGN) are cytoplasmic. The chain crosses the membrane as a helical span at residues 789–809 (LTFILAIIVFIFALVGKQLLS). At 810–833 (EDYGCRKDGVSVWNGEKLRWHMCD) the chain is on the extracellular side. The segment at residues 834 to 854 (FFHSFLVVFRILCGEWIENMW) is an intramembrane region (pore-forming). At 855-863 (VCMEVSQKS) the chain is on the extracellular side. Cys-856 and Cys-865 are oxidised to a cystine. A helical membrane pass occupies residues 864 to 889 (ICLILFLTVMVLGNLVVLNLFIALLL). Residues 890-1148 (NSFSADNLTA…GWQVRKTCYR (259 aa)) are Cytoplasmic-facing. The interval 1008 to 1094 (DELEEDMEQA…SEGSTVDCPD (87 aa)) is disordered. The stretch at 1141-1450 (QVRKTCYRIV…KKYYNAMKKL (310 aa)) is one III repeat. The helical transmembrane segment at 1149 to 1172 (IVEHSWFESFIIFMILLSSGALAF) threads the bilayer. Residues 1173–1185 (EDNYLEEKPRVKS) lie on the Extracellular side of the membrane. The helical transmembrane segment at 1186-1211 (VLEYTDRVFTFIFVFEMLLKWVAYGF) threads the bilayer. Residues 1212 to 1217 (KKYFTN) are Cytoplasmic-facing. Residues 1218–1239 (AWCWLDFLIVNISLTSLIAKIL) form a helical membrane-spanning segment. Residues 1240–1243 (EYSD) lie on the Extracellular side of the membrane. A helical; Voltage-sensor transmembrane segment spans residues 1244–1265 (VASIKALRTLRALRPLRALSRF). At 1266–1284 (EGMRVVVDALVGAIPSIMN) the chain is on the cytoplasmic side. A helical membrane pass occupies residues 1285 to 1312 (VLLVCLIFWLIFSIMGVNLFAGKFSKCV). The Extracellular portion of the chain corresponds to 1313-1354 (DTRNNPFSNVNSTMVNNKSECHNQNSTGHFFWVNVKVNFDNV). N-linked (GlcNAc...) asparagine glycosylation is found at Asn-1323, Asn-1329, and Asn-1337. Residues 1355–1376 (AMGYLALLQVATFKGWMDIMYA) constitute an intramembrane region (pore-forming). Over 1377–1392 (AVDSGEINSQPNWENN) the chain is Extracellular. The chain crosses the membrane as a helical span at residues 1393–1419 (LYMYLYFVVFIIFGGFFTLNLFVGVII). Residues 1420 to 1472 (DNFNQQKKKLGGQDIFMTEEQKKYYNAMKKLGSKKPQKPIPRPLNKYQGFVFD) lie on the Cytoplasmic side of the membrane. Phosphoserine; by PKC is present on Ser-1452. The stretch at 1459 to 1758 (IPRPLNKYQG…WEKFDPEATQ (300 aa)) is one IV repeat. A helical membrane pass occupies residues 1473-1496 (IVTRQAFDIIIMVLICLNMITMMV). At 1497 to 1507 (ETDEQGEEKTK) the chain is on the extracellular side. The chain crosses the membrane as a helical span at residues 1508 to 1531 (VLGRINQFFVAVFTGECVMKMFAL). Residues 1532-1537 (RQYYFT) lie on the Cytoplasmic side of the membrane. Residues 1538–1561 (NGWNVFDFIVVILSIGSLLFSAIL) traverse the membrane as a helical segment. Residues 1562–1573 (KSLENYFSPTLF) lie on the Extracellular side of the membrane. Residues 1574–1595 (RVIRLARIGRILRLIRAAKGIR) traverse the membrane as a helical; Voltage-sensor segment. The Cytoplasmic segment spans residues 1596–1610 (TLLFALMMSLPALFN). A helical transmembrane segment spans residues 1611 to 1633 (IGLLLFLVMFIYSIFGMASFANV). The Extracellular segment spans residues 1634-1647 (VDEAGIDDMFNFKT). Residues 1648 to 1670 (FGNSMLCLFQITTSAGWDGLLSP) constitute an intramembrane region (pore-forming). Over 1671–1698 (ILNTGPPYCDPNLPNSNGSRGNCGSPAV) the chain is Extracellular. Asn-1687 carries N-linked (GlcNAc...) asparagine glycosylation. A helical membrane pass occupies residues 1699–1723 (GIIFFTTYIIISFLIVVNMYIAVIL). Over 1724–1956 (ENFNVATEES…AKEGNSPGPQ (233 aa)) the chain is Cytoplasmic. The IQ domain maps to 1852–1881 (EDLSATVIQKAYRSYMLHRSLTLSNTLHVP). Residues 1906–1956 (DKSETASATSFPPSYDSVTRGLSDRANINPSSSMQNEDEVAAKEGNSPGPQ) form a disordered region. A compositionally biased stretch (polar residues) spans 1931–1940 (ANINPSSSMQ).

This sequence belongs to the sodium channel (TC 1.A.1.10) family. Nav1.8/SCN10A subfamily. The channel consists of an ion conducting pore forming alpha-subunit regulated by one or more associated auxiliary subunits SCN1B, SCN2B and SCN3B; electrophysiological properties may vary depending on the type of the associated beta subunits. Found in a number of complexes with PRX, DYNLT1 and PDZD2. Interacts with proteins such as FSTL1, PRX, DYNLT1, PDZD2, S100A10 and many others. Interacts with NEDD4 and NEDD4L. In terms of processing, ubiquitinated by NEDD4L; which promotes its endocytosis. Phosphorylation at Ser-1452 by PKC in a highly conserved cytoplasmic loop slows inactivation of the sodium channel and reduces peak sodium currents. Post-translationally, lacks the cysteine which covalently binds the conotoxin GVIIJ. This cysteine (position 815) is speculated in other sodium channel subunits alpha to be implied in covalent binding with the sodium channel subunit beta-2 or beta-4. Expressed in dorsal root ganglia, trigeminal ganglia, nodose ganglia and sciatic nerve.

The protein resides in the cell membrane. The enzyme catalyses Na(+)(in) = Na(+)(out). In terms of biological role, tetrodotoxin-resistant channel that mediates the voltage-dependent sodium ion permeability of excitable membranes. Assuming opened or closed conformations in response to the voltage difference across the membrane, the protein forms a sodium-selective channel through which sodium ions may pass in accordance with their electrochemical gradient. Plays a role in neuropathic pain mechanisms. In Rattus norvegicus (Rat), this protein is Sodium channel protein type 10 subunit alpha.